We begin with the raw amino-acid sequence, 168 residues long: Vitelline membrane protein Vm26Ab (168 aa).

Residues 1 to 23 (MAFNFGHLLIAGLVALSAVSSET) form the signal peptide. Positions 24–42 (IQLQPTQGILIPAPLAENI) are cleaved as a propeptide — removed between stage 11 and 14 of oogenesis. An essential for N-terminal propeptide removal. Potential serine protease cleavage site region spans residues 43–46 (RVSR). An 8 X 8 AA approximate repeats of P-[AS]-Y-S-A-P-A-[AS] region spans residues 52–119 (YGAAPAAPSY…PAYSAPASIP (68 aa)). One copy of the 1; half-length repeat lies at 55-58 (APAA). Residues 59 to 66 (PSYSAPAA) form repeat 2. The 3; approximate repeat unit spans residues 70 to 77 (QAYSAPAA). 5 repeat units span residues 78-85 (PAYSAPAA), 86-93 (PAYSAPAA), 94-101 (PAYSAPAA), 102-109 (PAYSAPAA), and 110-117 (PAYSAPAS). A VM domain is found at 117–154 (SIPSPPCPKNYLFSCQPSLQPVPCSAPAQSYGSAGAYS). Positions 155–168 (QYVPQYAVPFVREL) are cleaved as a propeptide — removed between stage 9 and 12 of oogenesis.

This sequence belongs to the vitelline membrane protein family. Interacts with vml and Vm26Aa; forms part of a disulfide-linked network within the vitelline membrane of stage 10 egg chambers. Proteolytically processed after secretion into the perivitelline space. Undergoes several proteolytic processing steps during formation of the vitelline membrane; an initial processing step removing a C-terminal propeptide occurs between stage 9 and 12 of oogenesis while a second removing a N-terminal propeptide occurs between stage 11 and 14. Post-translationally, becomes part of a disulfide-linked network including other vitelline membrane proteins, including vml and Vm26Aa, during vitelline membrane biogenesis and maturation. Cys-123, Cys-131 and Cys-140 are involved in disulfide network formation, with Cys-131 being the most important. Undergoes both disulfide and non-disulfide cross-linking upon incorporation into the vitelline membrane. Follicle cells.

It is found in the secreted. Its subcellular location is the extracellular space. The protein resides in the extracellular matrix. Functionally, major early eggshell protein secreted by follicle cells into the perivitelline space and incorporated into the vitelline membrane. Involved in vitelline membrane biogenesis; forms a cross-linked network with other vitelline membrane components. The polypeptide is Vitelline membrane protein Vm26Ab (Drosophila melanogaster (Fruit fly)).